The sequence spans 251 residues: HTH-type transcriptional regulator UlaR (251 aa).

One can recognise an HTH deoR-type domain in the interval Glu3–Ala58. The H-T-H motif DNA-binding region spans Val20–Asp39.

Its subcellular location is the cytoplasm. Its function is as follows. Represses ulaG and the ulaABCDEF operon. The sequence is that of HTH-type transcriptional regulator UlaR from Shigella dysenteriae serotype 1 (strain Sd197).